A 406-amino-acid chain; its full sequence is Enoyl-[acyl-carrier-protein] reductase [NADH] (406 aa).

Residues 48–53, 74–75, 111–112, and 140–141 contribute to the NAD(+) site; these read GASTGF, FE, DA, and IA. Substrate is bound at residue tyrosine 226. Catalysis depends on tyrosine 236, which acts as the Proton donor. NAD(+) contacts are provided by residues lysine 245 and 275-277; that span reads LVT.

Belongs to the TER reductase family. Monomer.

It carries out the reaction a 2,3-saturated acyl-[ACP] + NAD(+) = a (2E)-enoyl-[ACP] + NADH + H(+). The protein operates within lipid metabolism; fatty acid biosynthesis. Functionally, involved in the final reduction of the elongation cycle of fatty acid synthesis (FAS II). Catalyzes the reduction of a carbon-carbon double bond in an enoyl moiety that is covalently linked to an acyl carrier protein (ACP). This Coxiella burnetii (strain RSA 331 / Henzerling II) protein is Enoyl-[acyl-carrier-protein] reductase [NADH].